The following is a 246-amino-acid chain: 5'-nucleotidase SurE (246 aa).

Positions 8, 9, 39, and 91 each coordinate a divalent metal cation.

The protein belongs to the SurE nucleotidase family. The cofactor is a divalent metal cation.

The protein resides in the cytoplasm. It catalyses the reaction a ribonucleoside 5'-phosphate + H2O = a ribonucleoside + phosphate. Functionally, nucleotidase that shows phosphatase activity on nucleoside 5'-monophosphates. The polypeptide is 5'-nucleotidase SurE (Actinobacillus succinogenes (strain ATCC 55618 / DSM 22257 / CCUG 43843 / 130Z)).